The primary structure comprises 389 residues: WAT1-related protein At1g21890 (389 aa).

The next 10 membrane-spanning stretches (helical) occupy residues Leu13 to Leu33, Tyr40 to Phe60, Ile73 to Tyr93, Thr102 to Phe122, Val142 to Ile162, Trp191 to Leu211, Leu225 to Val245, Phe260 to Val280, Val287 to Val307, and Ile312 to Trp332. 2 EamA domains span residues Ala23 to Leu150 and Trp205 to Val331. Residues Arg339–Thr361 form a disordered region.

This sequence belongs to the drug/metabolite transporter (DMT) superfamily. Plant drug/metabolite exporter (P-DME) (TC 2.A.7.4) family.

The protein localises to the membrane. In Arabidopsis thaliana (Mouse-ear cress), this protein is WAT1-related protein At1g21890.